Consider the following 489-residue polypeptide: Protein SOF1 (489 aa).

WD repeat units lie at residues glycine 65–serine 105, valine 113–lysine 158, aspartate 177–aspartate 214, tryptophan 217–lysine 257, valine 259–asparagine 299, aspartate 303–isoleucine 342, and lysine 346–valine 385. Basic and acidic residues-rich tracts occupy residues arginine 440 to lysine 459 and histidine 466 to lysine 489. Positions arginine 440 to lysine 489 are disordered.

This sequence belongs to the WD repeat DCAF13/WDSOF1 family. Interacts with snoRNA U3. Interacts with NOP1 and MPP10. Component of the ribosomal small subunit (SSU) processome composed of at least 40 protein subunits and snoRNA U3.

The protein localises to the nucleus. Its subcellular location is the nucleolus. Its function is as follows. Required for ribosomal RNA processing. The sequence is that of Protein SOF1 (SOF1) from Saccharomyces cerevisiae (strain ATCC 204508 / S288c) (Baker's yeast).